Reading from the N-terminus, the 325-residue chain is Phosphate acyltransferase (325 aa).

The protein belongs to the PlsX family. Homodimer. Probably interacts with PlsY.

Its subcellular location is the cytoplasm. The enzyme catalyses a fatty acyl-[ACP] + phosphate = an acyl phosphate + holo-[ACP]. It participates in lipid metabolism; phospholipid metabolism. Catalyzes the reversible formation of acyl-phosphate (acyl-PO(4)) from acyl-[acyl-carrier-protein] (acyl-ACP). This enzyme utilizes acyl-ACP as fatty acyl donor, but not acyl-CoA. The chain is Phosphate acyltransferase from Mycoplasmopsis pulmonis (strain UAB CTIP) (Mycoplasma pulmonis).